We begin with the raw amino-acid sequence, 182 residues long: WUSCHEL-related homeobox 5 (182 aa).

The disordered stretch occupies residues 1-24; the sequence is MSFSVKGRSLRGNNNGGTGTKCGR. Residues 20 to 84 constitute a DNA-binding region (homeobox; WUS-type); sequence TKCGRWNPTV…NHKARERQKR (65 aa).

This sequence belongs to the WUS homeobox family. In terms of tissue distribution, specifically expressed in the central cells of a quiescent center (QC) of the root.

It localises to the nucleus. In terms of biological role, transcription factor, which may be involved in the specification and maintenance of the stem cells (QC cells) in the root apical meristem (RAM). This Arabidopsis thaliana (Mouse-ear cress) protein is WUSCHEL-related homeobox 5 (WOX5).